Reading from the N-terminus, the 733-residue chain is Vinexin (733 aa).

Disordered stretches follow at residues 1–51, 129–165, 224–285, and 352–448; these read MARI…SNLD, TWPG…RQDK, SARA…NQVP, and ETRL…KRKA. A compositionally biased stretch (basic and acidic residues) spans 32–42; the sequence is DPNRVHTKEQL. Polar residues predominate over residues 147 to 157; sequence QHAQNWSATWT. The SoHo domain occupies 164-232; that stretch reads DKRWVKYEGI…VSARASSAEP (69 aa). Composition is skewed to polar residues over residues 245–256 and 264–277; these read PGTTETSSGRNW and RNTF…SSSG. Phosphoserine is present on residues Ser412 and Ser459. SH3 domains lie at 444 to 503 and 518 to 579; these read KKRK…VLPA and LEYG…INRE. A binds to vinculin region spans residues 444 to 579; sequence KKRKAARLKF…PASYVQINRE (136 aa). A disordered region spans residues 584 to 672; sequence LCDDGPQLPA…INLGPSSPNT (89 aa). Ser594 carries the post-translational modification Phosphoserine; by MAPK1. The span at 597–613 shows a compositional bias: low complexity; it reads PTTTAHLSSHSHPSSIP. Ser607, Ser610, and Ser624 each carry phosphoserine. The span at 638 to 651 shows a compositional bias: polar residues; sequence EPRSQTQSLNTPGP. Residues 674–733 form the SH3 3 domain; sequence IHWTPYRAMYQYRPQNEDELELREGDRVDVMQQCDDGWFVGVSRRTQKFGTFPGNYVAPV. The binds to SOS stretch occupies residues 674-733; the sequence is IHWTPYRAMYQYRPQNEDELELREGDRVDVMQQCDDGWFVGVSRRTQKFGTFPGNYVAPV.

In terms of assembly, interacts with vinculin by the first two SH3 domains and the proline rich region of vinculin. Binds to SOS (guanine nucleotide exchange factor of RAS and RAC), through its third SH3 domain. The formation of this complex is down-regulated by phosphorylation of SOS. Interacts with SAFB2, INPPL1/SHIP2 and SRCIN1. Interacts with DLG5 through its third SH3 domain. Interacts with SOCS7 and MAPK1/ERK2. Interacts with FASLG. Post-translationally, phosphorylated at Ser-594 by MAPK1/ERK2 during cell spreading.

The protein localises to the cell junction. Its subcellular location is the focal adhesion. It is found in the cytoplasm. It localises to the cytoskeleton. In terms of biological role, promotes up-regulation of actin stress fiber formation. The polypeptide is Vinexin (Sorbs3) (Mus musculus (Mouse)).